Consider the following 255-residue polypeptide: Triosephosphate isomerase (255 aa).

Asparagine 9–lysine 11 is a substrate binding site. Histidine 96 acts as the Electrophile in catalysis. The active-site Proton acceptor is the glutamate 170. Residues glycine 176, serine 216, and glycine 237–glycine 238 contribute to the substrate site.

Belongs to the triosephosphate isomerase family. Homodimer.

The protein localises to the cytoplasm. It carries out the reaction D-glyceraldehyde 3-phosphate = dihydroxyacetone phosphate. The protein operates within carbohydrate biosynthesis; gluconeogenesis. Its pathway is carbohydrate degradation; glycolysis; D-glyceraldehyde 3-phosphate from glycerone phosphate: step 1/1. Its function is as follows. Involved in the gluconeogenesis. Catalyzes stereospecifically the conversion of dihydroxyacetone phosphate (DHAP) to D-glyceraldehyde-3-phosphate (G3P). The chain is Triosephosphate isomerase from Magnetococcus marinus (strain ATCC BAA-1437 / JCM 17883 / MC-1).